Consider the following 53-residue polypeptide: uncharacterized protein (53 aa).

A helical transmembrane segment spans residues 26–46 (CYLLFCFLECFLNLFKKCGVF).

It belongs to the plectrovirus ORF11 family.

The protein localises to the host membrane. This is an uncharacterized protein from Spiroplasma virus SpV1-R8A2 B (SpV1).